The primary structure comprises 428 residues: Serine--tRNA ligase (428 aa).

235–237 (TAE) is a binding site for L-serine. Residue 266–268 (RSE) participates in ATP binding. Glutamate 289 provides a ligand contact to L-serine. 353–356 (EISS) contacts ATP. Serine 389 contacts L-serine.

Belongs to the class-II aminoacyl-tRNA synthetase family. Type-1 seryl-tRNA synthetase subfamily. As to quaternary structure, homodimer. The tRNA molecule binds across the dimer.

Its subcellular location is the cytoplasm. The enzyme catalyses tRNA(Ser) + L-serine + ATP = L-seryl-tRNA(Ser) + AMP + diphosphate + H(+). It carries out the reaction tRNA(Sec) + L-serine + ATP = L-seryl-tRNA(Sec) + AMP + diphosphate + H(+). The protein operates within aminoacyl-tRNA biosynthesis; selenocysteinyl-tRNA(Sec) biosynthesis; L-seryl-tRNA(Sec) from L-serine and tRNA(Sec): step 1/1. Its function is as follows. Catalyzes the attachment of serine to tRNA(Ser). Is also able to aminoacylate tRNA(Sec) with serine, to form the misacylated tRNA L-seryl-tRNA(Sec), which will be further converted into selenocysteinyl-tRNA(Sec). The sequence is that of Serine--tRNA ligase from Shewanella sp. (strain ANA-3).